Consider the following 138-residue polypeptide: Cysteine desulfuration protein SufE (138 aa).

C51 serves as the catalytic Cysteine persulfide intermediate.

This sequence belongs to the SufE family. As to quaternary structure, homodimer. Interacts with SufS.

The protein resides in the cytoplasm. It functions in the pathway cofactor biosynthesis; iron-sulfur cluster biosynthesis. Functionally, participates in cysteine desulfuration mediated by SufS. Cysteine desulfuration mobilizes sulfur from L-cysteine to yield L-alanine and constitutes an essential step in sulfur metabolism for biosynthesis of a variety of sulfur-containing biomolecules. Functions as a sulfur acceptor for SufS, by mediating the direct transfer of the sulfur atom from the S-sulfanylcysteine of SufS, an intermediate product of cysteine desulfuration process. This chain is Cysteine desulfuration protein SufE, found in Klebsiella pneumoniae (strain 342).